The chain runs to 135 residues: Large ribosomal subunit protein uL16c (135 aa).

Belongs to the universal ribosomal protein uL16 family. In terms of assembly, part of the 50S ribosomal subunit.

The protein resides in the plastid. It is found in the chloroplast. In Nymphaea alba (White water-lily), this protein is Large ribosomal subunit protein uL16c.